A 273-amino-acid polypeptide reads, in one-letter code: uncharacterized protein (273 aa).

This is an uncharacterized protein from Methanocaldococcus jannaschii (strain ATCC 43067 / DSM 2661 / JAL-1 / JCM 10045 / NBRC 100440) (Methanococcus jannaschii).